A 625-amino-acid chain; its full sequence is Acetolactate synthase (625 aa).

A disordered region spans residues 1–29; sequence MSAPTKPHARPQGAGNSVPNTVKPATQFP. The segment covering 14–29 has biased composition (polar residues); it reads AGNSVPNTVKPATQFP. Glutamate 92 contributes to the thiamine diphosphate binding site. Residues arginine 194, 300–321, and 343–362 contribute to the FAD site; these read HGTV…LGTR and DIDP…IVGD. The segment at 436 to 516 is thiamine pyrophosphate binding; that stretch reads QHQMWAAQFI…IKVALINNGN (81 aa). Positions 487 and 514 each coordinate Mg(2+).

This sequence belongs to the TPP enzyme family. The cofactor is Mg(2+). Requires thiamine diphosphate as cofactor.

It catalyses the reaction 2 pyruvate + H(+) = (2S)-2-acetolactate + CO2. It participates in amino-acid biosynthesis; L-isoleucine biosynthesis; L-isoleucine from 2-oxobutanoate: step 1/4. Its pathway is amino-acid biosynthesis; L-valine biosynthesis; L-valine from pyruvate: step 1/4. The polypeptide is Acetolactate synthase (ilvB) (Mycobacterium leprae (strain TN)).